Consider the following 663-residue polypeptide: Transketolase 2 (663 aa).

Histidine 25 is a binding site for substrate. Residues histidine 65 and 113-115 contribute to the thiamine diphosphate site; that span reads GPL. Aspartate 154 is a Mg(2+) binding site. Thiamine diphosphate contacts are provided by glycine 155 and asparagine 184. Mg(2+) contacts are provided by asparagine 184 and isoleucine 186. Positions 259, 356, and 383 each coordinate substrate. Residue histidine 259 coordinates thiamine diphosphate. Glutamate 410 acts as the Proton donor in catalysis. Thiamine diphosphate is bound at residue phenylalanine 436. Substrate contacts are provided by histidine 460, aspartate 468, and arginine 519.

The protein belongs to the transketolase family. As to quaternary structure, homodimer. Requires Mg(2+) as cofactor. It depends on Ca(2+) as a cofactor. Mn(2+) is required as a cofactor. The cofactor is Co(2+). Thiamine diphosphate serves as cofactor.

It carries out the reaction D-sedoheptulose 7-phosphate + D-glyceraldehyde 3-phosphate = aldehydo-D-ribose 5-phosphate + D-xylulose 5-phosphate. Functionally, catalyzes the transfer of a two-carbon ketol group from a ketose donor to an aldose acceptor, via a covalent intermediate with the cofactor thiamine pyrophosphate. The protein is Transketolase 2 (tkt2) of Vibrio vulnificus (strain CMCP6).